We begin with the raw amino-acid sequence, 288 residues long: ATP synthase gamma chain (288 aa).

The protein belongs to the ATPase gamma chain family. As to quaternary structure, F-type ATPases have 2 components, CF(1) - the catalytic core - and CF(0) - the membrane proton channel. CF(1) has five subunits: alpha(3), beta(3), gamma(1), delta(1), epsilon(1). CF(0) has three main subunits: a, b and c.

It localises to the cell inner membrane. Its function is as follows. Produces ATP from ADP in the presence of a proton gradient across the membrane. The gamma chain is believed to be important in regulating ATPase activity and the flow of protons through the CF(0) complex. This Legionella pneumophila (strain Corby) protein is ATP synthase gamma chain.